We begin with the raw amino-acid sequence, 842 residues long: Unconventional myosin-Ia (842 aa).

Residues 1-686 enclose the Myosin motor domain; the sequence is GVEDLILLEP…TLFYLEEQRR (686 aa). 93–100 provides a ligand contact to ATP; that stretch reads GESGAGKT. An actin-binding region spans residues 563–585; it reads VAILMKNLYSKNPNYIRCIKPND. IQ domains follow at residues 689 to 712, 713 to 733, and 735 to 764; these read LQQL…YQQM, RKSQ…KHYG, and IRSS…SGAR.

The protein belongs to the TRAFAC class myosin-kinesin ATPase superfamily. Myosin family. In terms of processing, phosphorylated by ALPK1.

In terms of biological role, involved in directing the movement of organelles along actin filaments. This chain is Unconventional myosin-Ia (Myo1a), found in Rattus norvegicus (Rat).